Consider the following 902-residue polypeptide: Chloride channel protein 2 (902 aa).

The Cytoplasmic portion of the chain corresponds to 1-89 (MAASAAAAGE…RCHKFLVSRV (89 aa)). Residues 18–36 (QYEQTLMYGRYTQELGAFA) form an essential for channel gating by both voltage and cell volume region. Thr22 bears the Phosphothreonine mark. A modulates channel gating by both voltage and cell volume region spans residues 38-51 (EEAARIRLGGPEPW). A run of 2 helical transmembrane segments spans residues 90 to 123 (GEDWIFLVLLGLLMALVSWAMDYAIAVCLQAQQW) and 132 to 157 (ILLQYLAWVTYPVVLITFSAGFTQIL). Residues 163-167 (GSGIP) carry the Selectivity filter part_1 motif. The segment at residues 166–173 (IPEMKTIL) is an intramembrane region (helical). A run of 2 helical transmembrane segments spans residues 182–200 (LTLKTFVAKVIGLTCALGS) and 207–225 (EGPFVHIASMCASLLSKFL). Residues 205–209 (GKEGP) carry the Selectivity filter part_2 motif. Intramembrane regions (helical) lie at residues 241–253 (MLAAACAVGVGCC) and 257–265 (PIGGVLFSI). Transmembrane regions (helical) follow at residues 277–297 (YWRGFFSATFSAFIFRVLAVW), 323–351 (LPAFAVIGIASGFGGALFVYLNRKIVQVM), 360–379 (FLMRKRLLFPALVTLLISTL), 431–451 (ANVFLTLVIFILMKFWMSALA), and 459–482 (GAFMPVFVIGAAFGRLVGESMAAW). The Selectivity filter part_3 motif lies at 459-463 (GAFMP). The segment at residues 499–513 (GGYAVVGAAALAGAV) is an intramembrane region (helical). The note=Loop between two helices intramembrane region spans 514–515 (TH). The helical intramembrane region spans 516–527 (TVSTAVIVFELT). The segment at residues 528–532 (GQIAH) is an intramembrane region (note=Loop between two helices). The chain crosses the membrane as a helical span at residues 533-550 (ILPVMIAVILANAVAQSL). Over 551 to 902 (QPSLYDSIIR…SPSDSDDKCQ (352 aa)) the chain is Cytoplasmic. Residues 586 to 644 (MVRDVPYVALNCTFRDLRLALHRTKGRMLALVESSESMILLGSIERSQVVTLLGAQLSA) enclose the CBS 1 domain. Residues 648–748 (RQHIQERRKA…TSDLEKPESC (101 aa)) are disordered. Polar residues-rich tracts occupy residues 671 to 683 (PESSVHFQVNTED) and 706 to 719 (SNASKAGETSTGSM). Residues 794-854 (IDPAPFQLVE…GSVTAQGVKV (61 aa)) enclose the CBS 2 domain. Residues 816-817 (LL) carry the Basolateral membrane sorting motif. Residues 860-902 (SFRDSATSSSDTETTEVHALWGPHSCHGLPRDGSPSDSDDKCQ) are disordered.

The protein belongs to the chloride channel (TC 2.A.49) family. ClC-2/CLCN2 subfamily. In terms of assembly, homodimer. Interacts with auxiliary subunit HEPACAM.

It localises to the cell membrane. It is found in the basolateral cell membrane. The protein localises to the cell projection. The protein resides in the dendritic spine membrane. Its subcellular location is the axon. It catalyses the reaction chloride(in) = chloride(out). The catalysed reaction is thiocyanate(in) = thiocyanate(out). It carries out the reaction bromide(in) = bromide(out). The enzyme catalyses nitrate(in) = nitrate(out). It catalyses the reaction iodide(out) = iodide(in). Common gate kinetics are down-regulated by intracellular ATP. Inhibited by AK-42, a derivative of meclofenamate. Inhibited by Cd(2+). Inhibited by Zn(2+) and PKC activation. Inhibited at acidic pH. CCLN2:HEPACAM channel conductance is up-regulated upon hypo-osmolarity. Voltage-gated and osmosensitive chloride channel. Forms a homodimeric channel where each subunit has its own ion conduction pathway. Conducts double-barreled currents controlled by two types of gates, two fast glutamate gates that control each subunit independently and a slow common gate that opens and shuts off both subunits simultaneously. Displays inward rectification currents activated upon membrane hyperpolarization and extracellular hypotonicity. Contributes to chloride conductance involved in neuron excitability. In hippocampal neurons, generates a significant part of resting membrane conductance and provides an additional chloride efflux pathway to prevent chloride accumulation in dendrites upon GABA receptor activation. In glia, associates with the auxiliary subunit HEPACAM/GlialCAM at astrocytic processes and myelinated fiber tracts where it may regulate transcellular chloride flux buffering extracellular chloride and potassium concentrations. Regulates aldosterone production in adrenal glands. The opening of CLCN2 channels at hyperpolarized membrane potentials in the glomerulosa causes cell membrane depolarization, activation of voltage-gated calcium channels and increased expression of aldosterone synthase, the rate-limiting enzyme for aldosterone biosynthesis. Contributes to chloride conductance in retinal pigment epithelium involved in phagocytosis of shed photoreceptor outer segments and photoreceptor renewal. Conducts chloride currents at the basolateral membrane of epithelial cells with a role in chloride reabsorption rather than secretion. Permeable to small monovalent anions with chloride &gt; thiocyanate &gt; bromide &gt; nitrate &gt; iodide ion selectivity. This is Chloride channel protein 2 (CLCN2) from Cavia porcellus (Guinea pig).